We begin with the raw amino-acid sequence, 188 residues long: Translation initiation factor IF-3 (188 aa).

It belongs to the IF-3 family. As to quaternary structure, monomer.

The protein resides in the cytoplasm. In terms of biological role, IF-3 binds to the 30S ribosomal subunit and shifts the equilibrium between 70S ribosomes and their 50S and 30S subunits in favor of the free subunits, thus enhancing the availability of 30S subunits on which protein synthesis initiation begins. The sequence is that of Translation initiation factor IF-3 from Fusobacterium nucleatum subsp. nucleatum (strain ATCC 25586 / DSM 15643 / BCRC 10681 / CIP 101130 / JCM 8532 / KCTC 2640 / LMG 13131 / VPI 4355).